We begin with the raw amino-acid sequence, 833 residues long: cGMP-specific 3',5'-cyclic phosphodiesterase (833 aa).

The residue at position 60 (Ser60) is a Phosphoserine. Positions 82 to 101 are disordered; sequence FLSDSGKKEQMPLTSPRFDS. GAF domains are found at residues 122 to 272 and 304 to 461; these read DVTA…GIVL and SLEV…GLGI. The region spanning 494-818 is the PDEase domain; it reads ETRELQALAA…QKWQALADQQ (325 aa). The active-site Proton donor is His571. 4 residues coordinate Zn(2+): His575, His611, Asp612, and Asp722. Asp612 provides a ligand contact to Mg(2+). Gln775 is a 3',5'-cyclic GMP binding site.

It belongs to the cyclic nucleotide phosphodiesterase family. Zn(2+) serves as cofactor. The cofactor is Mg(2+). Phosphorylation is regulated by binding of cGMP to the two allosteric sites. Phosphorylation by PRKG1 leads to its activation.

It carries out the reaction 3',5'-cyclic GMP + H2O = GMP + H(+). It participates in purine metabolism; 3',5'-cyclic GMP degradation; GMP from 3',5'-cyclic GMP: step 1/1. In terms of biological role, plays a role in signal transduction by regulating the intracellular concentration of cyclic nucleotides. This phosphodiesterase catalyzes the specific hydrolysis of cGMP to 5'-GMP. Specifically regulates nitric-oxide-generated cGMP. In Rattus norvegicus (Rat), this protein is cGMP-specific 3',5'-cyclic phosphodiesterase (Pde5a).